Consider the following 75-residue polypeptide: UPF0346 protein LGAS_0911 (75 aa).

The protein belongs to the UPF0346 family.

The polypeptide is UPF0346 protein LGAS_0911 (Lactobacillus gasseri (strain ATCC 33323 / DSM 20243 / BCRC 14619 / CIP 102991 / JCM 1131 / KCTC 3163 / NCIMB 11718 / NCTC 13722 / AM63)).